We begin with the raw amino-acid sequence, 322 residues long: Acetyl-coenzyme A carboxylase carboxyl transferase subunit alpha (322 aa).

The 255-residue stretch at 39–293 folds into the CoA carboxyltransferase C-terminal domain; it reads RLAAKSQQLT…KRALAESLRQ (255 aa).

This sequence belongs to the AccA family. As to quaternary structure, acetyl-CoA carboxylase is a heterohexamer composed of biotin carboxyl carrier protein (AccB), biotin carboxylase (AccC) and two subunits each of ACCase subunit alpha (AccA) and ACCase subunit beta (AccD).

The protein localises to the cytoplasm. It catalyses the reaction N(6)-carboxybiotinyl-L-lysyl-[protein] + acetyl-CoA = N(6)-biotinyl-L-lysyl-[protein] + malonyl-CoA. The protein operates within lipid metabolism; malonyl-CoA biosynthesis; malonyl-CoA from acetyl-CoA: step 1/1. Its function is as follows. Component of the acetyl coenzyme A carboxylase (ACC) complex. First, biotin carboxylase catalyzes the carboxylation of biotin on its carrier protein (BCCP) and then the CO(2) group is transferred by the carboxyltransferase to acetyl-CoA to form malonyl-CoA. This is Acetyl-coenzyme A carboxylase carboxyl transferase subunit alpha from Ralstonia nicotianae (strain ATCC BAA-1114 / GMI1000) (Ralstonia solanacearum).